The sequence spans 132 residues: Small ribosomal subunit protein uS8c (132 aa).

This sequence belongs to the universal ribosomal protein uS8 family. In terms of assembly, part of the 30S ribosomal subunit.

It is found in the plastid. Its subcellular location is the chloroplast. One of the primary rRNA binding proteins, it binds directly to 16S rRNA central domain where it helps coordinate assembly of the platform of the 30S subunit. This chain is Small ribosomal subunit protein uS8c (rps8), found in Illicium oligandrum (Star anise).